Consider the following 751-residue polypeptide: Palmitoyltransferase ZDHHC8B (751 aa).

The Cytoplasmic portion of the chain corresponds to 1–13; that stretch reads MPNSVGKRFKPTK. The chain crosses the membrane as a helical span at residues 14-34; it reads YIPVSTAATLLVGSTTLFFVF. The Extracellular segment spans residues 35–41; it reads TCPWLTK. A helical transmembrane segment spans residues 42–62; it reads AVSPVVPLYNGIVFLFVLANF. Residues 63 to 148 lie on the Cytoplasmic side of the membrane; the sequence is SMATFMDPGV…NCIGRRNYRY (86 aa). Residues 104-154 enclose the DHHC domain; sequence KWCATCHFYRPPRCSHCSVCDNCVEEFDHHCPWVNNCIGRRNYRYFFLFLL. Cys-134 functions as the S-palmitoyl cysteine intermediate in the catalytic mechanism. The helical transmembrane segment at 149 to 169 threads the bilayer; sequence FFLFLLSLSVHMVGVFSFGLL. Over 170 to 185 the chain is Extracellular; that stretch reads FVLHHLETLSALHTTV. Residues 186–206 form a helical membrane-spanning segment; it reads TLVVMCVTGLFFIPVMGLTGF. Over 207–751 the chain is Cytoplasmic; that stretch reads HMVLVARGRT…VGGTTYEISV (545 aa). Disordered regions lie at residues 293–346, 437–461, 633–659, 666–685, and 703–736; these read RSKS…PSTP, CTPLGGTKHETITSTPHRGVFSPGT, RSSASSLVRAPRTSTTSLHTDGGGMNR, RSPVHQSHQSPTSVPRSPSY, and HLGTREDIGQGKVNGQLKGQYGTPSGTPSRHTSV. Positions 326 to 338 are enriched in low complexity; the sequence is SQLTSSEESSLSS. Polar residues-rich tracts occupy residues 633-651, 669-681, and 724-733; these read RSSASSLVRAPRTSTTSLH, VHQSHQSPTSVPR, and GTPSGTPSRH.

It belongs to the DHHC palmitoyltransferase family. ERF2/ZDHHC9 subfamily.

It localises to the golgi apparatus membrane. It is found in the mitochondrion membrane. It catalyses the reaction L-cysteinyl-[protein] + hexadecanoyl-CoA = S-hexadecanoyl-L-cysteinyl-[protein] + CoA. Functionally, palmitoyltransferase that catalyzes the addition of palmitate onto various protein substrates and therefore function in several unrelated biological processes. This chain is Palmitoyltransferase ZDHHC8B, found in Danio rerio (Zebrafish).